A 420-amino-acid polypeptide reads, in one-letter code: MSNTQKQLALAKAAKKSVNTADTEEKNRALLAMADSLEAAAADILAANRQDLEAAAGKIPESMTDRLLLDGKRICAMADGIRAVAALPDPVGEILETSTLPNGLEIVKKRVAMGVIGIIYESRPNVTSDAAALALKSGSAVVLRSGKDAFQSARAIVAALKTGLAQTRIDPDALQLIEDTGREGSYEMMRAKDYLDLLIPRGGAGLIRAVVENAVVPVIETGTGIVHIYVDKDADLEKAIRIVRNAKTSRPSVCNSMEVLLVHEDIAADFLPKLERLLVRDRIEAGLPPVRFRLDPQAARHIGGEAAGADDFDTEFLDYILAVKTVASVEEAVGHIEAHGTHHSDGIVTENRHAADYFTTHIDSAAVYVNASTRFTDGGEFGLGCEMGISTQKLHARGPMGLKELTSYKYIVQGTGQVRE.

It belongs to the gamma-glutamyl phosphate reductase family.

The protein localises to the cytoplasm. The enzyme catalyses L-glutamate 5-semialdehyde + phosphate + NADP(+) = L-glutamyl 5-phosphate + NADPH + H(+). It participates in amino-acid biosynthesis; L-proline biosynthesis; L-glutamate 5-semialdehyde from L-glutamate: step 2/2. Functionally, catalyzes the NADPH-dependent reduction of L-glutamate 5-phosphate into L-glutamate 5-semialdehyde and phosphate. The product spontaneously undergoes cyclization to form 1-pyrroline-5-carboxylate. In Neisseria meningitidis serogroup C / serotype 2a (strain ATCC 700532 / DSM 15464 / FAM18), this protein is Gamma-glutamyl phosphate reductase.